A 334-amino-acid polypeptide reads, in one-letter code: 4-hydroxy-3-methylbut-2-enyl diphosphate reductase (334 aa).

Cys19 is a binding site for [4Fe-4S] cluster. (2E)-4-hydroxy-3-methylbut-2-enyl diphosphate contacts are provided by His48 and His84. Dimethylallyl diphosphate-binding residues include His48 and His84. Residues His48 and His84 each coordinate isopentenyl diphosphate. Cys106 serves as a coordination point for [4Fe-4S] cluster. His134 contacts (2E)-4-hydroxy-3-methylbut-2-enyl diphosphate. Residue His134 participates in dimethylallyl diphosphate binding. His134 is a binding site for isopentenyl diphosphate. The active-site Proton donor is the Glu136. (2E)-4-hydroxy-3-methylbut-2-enyl diphosphate is bound at residue Thr175. Residue Cys205 coordinates [4Fe-4S] cluster. Ser233, Ser234, Asn235, and Ser278 together coordinate (2E)-4-hydroxy-3-methylbut-2-enyl diphosphate. Dimethylallyl diphosphate-binding residues include Ser233, Ser234, Asn235, and Ser278. Residues Ser233, Ser234, Asn235, and Ser278 each coordinate isopentenyl diphosphate.

The protein belongs to the IspH family. It depends on [4Fe-4S] cluster as a cofactor.

The enzyme catalyses isopentenyl diphosphate + 2 oxidized [2Fe-2S]-[ferredoxin] + H2O = (2E)-4-hydroxy-3-methylbut-2-enyl diphosphate + 2 reduced [2Fe-2S]-[ferredoxin] + 2 H(+). The catalysed reaction is dimethylallyl diphosphate + 2 oxidized [2Fe-2S]-[ferredoxin] + H2O = (2E)-4-hydroxy-3-methylbut-2-enyl diphosphate + 2 reduced [2Fe-2S]-[ferredoxin] + 2 H(+). Its pathway is isoprenoid biosynthesis; dimethylallyl diphosphate biosynthesis; dimethylallyl diphosphate from (2E)-4-hydroxy-3-methylbutenyl diphosphate: step 1/1. It participates in isoprenoid biosynthesis; isopentenyl diphosphate biosynthesis via DXP pathway; isopentenyl diphosphate from 1-deoxy-D-xylulose 5-phosphate: step 6/6. Functionally, catalyzes the conversion of 1-hydroxy-2-methyl-2-(E)-butenyl 4-diphosphate (HMBPP) into a mixture of isopentenyl diphosphate (IPP) and dimethylallyl diphosphate (DMAPP). Acts in the terminal step of the DOXP/MEP pathway for isoprenoid precursor biosynthesis. This Chelativorans sp. (strain BNC1) protein is 4-hydroxy-3-methylbut-2-enyl diphosphate reductase.